Here is a 207-residue protein sequence, read N- to C-terminus: Claudin-11 (207 aa).

A topological domain (cytoplasmic) is located at residue Met-1. A helical transmembrane segment spans residues 2-22; the sequence is VATCLQVVGFVTSFVGWIGII. Residues 23–82 lie on the Extracellular side of the membrane; that stretch reads VTTSTNDWVVTCGYTIPTCRKLDELGSKGLWADCVMATGLYHCKPLVDILILPGYVQACR. A helical membrane pass occupies residues 83–103; sequence ALMIAASVLGLPAILLLLTVL. At 104–122 the chain is on the cytoplasmic side; sequence PCIRMGHEPGVAKYRRAQL. A helical membrane pass occupies residues 123 to 143; it reads AGVMLVLVALCAMVATIWFPV. Residues 144-157 lie on the Extracellular side of the membrane; sequence CAHRETTIVSFGYS. A helical transmembrane segment spans residues 158–178; the sequence is LYAGWIGAVLCLVGGCVIVCC. At 179-207 the chain is on the cytoplasmic side; it reads AGDAQAFGENRFYYSSGSSSPTHAKSAHV. 4 positions are modified to phosphoserine: Ser-193, Ser-194, Ser-197, and Ser-198.

The protein belongs to the claudin family. Interacts with tetraspanin-3/TSPAN3. Interacts with OCLN.

It localises to the cell junction. Its subcellular location is the tight junction. It is found in the cell membrane. Plays a major role in tight junction-specific obliteration of the intercellular space, through calcium-independent cell-adhesion activity. This chain is Claudin-11 (CLDN11), found in Bos taurus (Bovine).